Consider the following 394-residue polypeptide: Acid ceramidase (394 aa).

Positions 1 to 18 are cleaved as a signal peptide; the sequence is MRGQSLLTWVLAAAVTCA. Residues Cys-30 and Cys-339 are joined by a disulfide bond. Cys-142 (nucleophile) is an active-site residue. 5 N-linked (GlcNAc...) asparagine glycosylation sites follow: Asn-172, Asn-194, Asn-258, Asn-341, and Asn-347. Cys-387 and Cys-391 are oxidised to a cystine.

Belongs to the acid ceramidase family. In terms of assembly, heterodimer; disulfide-linked. The heterodimer is composed of the disulfide-linked alpha and beta chains produced by autocatalytic cleavage of the precursor. N-glycosylated. Post-translationally, proteolytically cleaved into two chains alpha and beta that remain associated via a disulfide bond. Cleavage gives rise to a conformation change that activates the enzyme. The same catalytic Cys residue mediates the autoproteolytic cleavage and subsequent hydrolysis of lipid substrates. The beta chain may undergo an additional C-terminal processing. In terms of tissue distribution, widely expressed.

The protein localises to the lysosome. Its subcellular location is the secreted. It carries out the reaction an N-acylsphing-4-enine + H2O = sphing-4-enine + a fatty acid. The enzyme catalyses N-dodecanoylsphing-4-enine + H2O = dodecanoate + sphing-4-enine. It catalyses the reaction N-(9Z-octadecenoyl)-sphing-4-enine + H2O = sphing-4-enine + (9Z)-octadecenoate. The catalysed reaction is N-tetradecanoylsphing-4-enine + H2O = tetradecanoate + sphing-4-enine. It carries out the reaction N-hexadecanoylsphing-4-enine + H2O = sphing-4-enine + hexadecanoate. The enzyme catalyses N-octadecanoylsphing-4-enine + H2O = sphing-4-enine + octadecanoate. It catalyses the reaction N-dodecanoyl-(4R)-hydroxysphinganine + H2O = (4R)-hydroxysphinganine + dodecanoate. The catalysed reaction is N-(dodecanoyl)-sphinganine + H2O = dodecanoate + sphinganine. It carries out the reaction N-(acetyl)-sphing-4-enine + H2O = sphing-4-enine + acetate. The enzyme catalyses N-(hexanoyl)sphing-4-enine + H2O = hexanoate + sphing-4-enine. It catalyses the reaction N-octanoylsphing-4-enine + H2O = octanoate + sphing-4-enine. The catalysed reaction is N-dodecanoylethanolamine + H2O = dodecanoate + ethanolamine. It participates in lipid metabolism; sphingolipid metabolism. Functionally, lysosomal ceramidase that hydrolyzes sphingolipid ceramides into sphingosine and free fatty acids at acidic pH. Ceramides, sphingosine, and its phosphorylated form sphingosine-1-phosphate are bioactive lipids that mediate cellular signaling pathways regulating several biological processes including cell proliferation, apoptosis and differentiation. Has a higher catalytic efficiency towards C12-ceramides versus other ceramides. Also catalyzes the reverse reaction allowing the synthesis of ceramides from fatty acids and sphingosine. For the reverse synthetic reaction, the natural sphingosine D-erythro isomer is more efficiently utilized as a substrate compared to D-erythro-dihydrosphingosine and D-erythro-phytosphingosine, while the fatty acids with chain lengths of 12 or 14 carbons are the most efficiently used. Also has an N-acylethanolamine hydrolase activity. By regulating the levels of ceramides, sphingosine and sphingosine-1-phosphate in the epidermis, mediates the calcium-induced differentiation of epidermal keratinocytes. Also indirectly regulates tumor necrosis factor/TNF-induced apoptosis. By regulating the intracellular balance between ceramides and sphingosine, in adrenocortical cells, probably also acts as a regulator of steroidogenesis. This is Acid ceramidase from Mus musculus (Mouse).